A 406-amino-acid polypeptide reads, in one-letter code: 4-hydroxy-3-methylbut-2-enyl diphosphate reductase (406 aa).

A [4Fe-4S] cluster-binding site is contributed by Cys66. His96 lines the (2E)-4-hydroxy-3-methylbut-2-enyl diphosphate pocket. Position 96 (His96) interacts with dimethylallyl diphosphate. His96 provides a ligand contact to isopentenyl diphosphate. Position 157 (Cys157) interacts with [4Fe-4S] cluster. His185 contacts (2E)-4-hydroxy-3-methylbut-2-enyl diphosphate. Dimethylallyl diphosphate is bound at residue His185. His185 serves as a coordination point for isopentenyl diphosphate. Catalysis depends on Glu187, which acts as the Proton donor. Residue Thr250 coordinates (2E)-4-hydroxy-3-methylbut-2-enyl diphosphate. Residue Cys288 coordinates [4Fe-4S] cluster. Residues Ser317, Ser318, Asn319, and Ser379 each contribute to the (2E)-4-hydroxy-3-methylbut-2-enyl diphosphate site. Residues Ser317, Ser318, Asn319, and Ser379 each contribute to the dimethylallyl diphosphate site. Positions 317, 318, 319, and 379 each coordinate isopentenyl diphosphate.

It belongs to the IspH family. Requires [4Fe-4S] cluster as cofactor.

The enzyme catalyses isopentenyl diphosphate + 2 oxidized [2Fe-2S]-[ferredoxin] + H2O = (2E)-4-hydroxy-3-methylbut-2-enyl diphosphate + 2 reduced [2Fe-2S]-[ferredoxin] + 2 H(+). The catalysed reaction is dimethylallyl diphosphate + 2 oxidized [2Fe-2S]-[ferredoxin] + H2O = (2E)-4-hydroxy-3-methylbut-2-enyl diphosphate + 2 reduced [2Fe-2S]-[ferredoxin] + 2 H(+). It functions in the pathway isoprenoid biosynthesis; dimethylallyl diphosphate biosynthesis; dimethylallyl diphosphate from (2E)-4-hydroxy-3-methylbutenyl diphosphate: step 1/1. It participates in isoprenoid biosynthesis; isopentenyl diphosphate biosynthesis via DXP pathway; isopentenyl diphosphate from 1-deoxy-D-xylulose 5-phosphate: step 6/6. Its function is as follows. Catalyzes the conversion of 1-hydroxy-2-methyl-2-(E)-butenyl 4-diphosphate (HMBPP) into a mixture of isopentenyl diphosphate (IPP) and dimethylallyl diphosphate (DMAPP). Acts in the terminal step of the DOXP/MEP pathway for isoprenoid precursor biosynthesis. The chain is 4-hydroxy-3-methylbut-2-enyl diphosphate reductase from Synechococcus sp. (strain RCC307).